A 222-amino-acid polypeptide reads, in one-letter code: Uridine diphosphate glucose pyrophosphatase NUDT14 (222 aa).

The Nudix hydrolase domain occupies 38 to 206 (KTHDSVTVLL…DIPKTLGVIF (169 aa)). The Nudix box signature appears at 111–129 (PGLSLEEVACKEAWEECGY).

Belongs to the Nudix hydrolase family. Homodimer. The cofactor is Mg(2+).

The protein localises to the cytoplasm. The catalysed reaction is UDP-sugar + H2O = UMP + alpha-D-aldose 1-phosphate.. In terms of biological role, hydrolyzes UDP-glucose to glucose 1-phosphate and UMP and ADP-ribose to ribose 5-phosphate and AMP. The physiological substrate is probably UDP-glucose. Poor activity on other substrates such as ADP-glucose, CDP-glucose, GDP-glucose and GDP-mannose. This is Uridine diphosphate glucose pyrophosphatase NUDT14 (NUDT14) from Homo sapiens (Human).